A 298-amino-acid chain; its full sequence is 4-diphosphocytidyl-2-C-methyl-D-erythritol kinase (298 aa).

K15 is an active-site residue. 100–110 contributes to the ATP binding site; that stretch reads PIAAGIGGGSA. D142 is an active-site residue.

Belongs to the GHMP kinase family. IspE subfamily.

It catalyses the reaction 4-CDP-2-C-methyl-D-erythritol + ATP = 4-CDP-2-C-methyl-D-erythritol 2-phosphate + ADP + H(+). It participates in isoprenoid biosynthesis; isopentenyl diphosphate biosynthesis via DXP pathway; isopentenyl diphosphate from 1-deoxy-D-xylulose 5-phosphate: step 3/6. Its function is as follows. Catalyzes the phosphorylation of the position 2 hydroxy group of 4-diphosphocytidyl-2C-methyl-D-erythritol. This is 4-diphosphocytidyl-2-C-methyl-D-erythritol kinase from Rhodopseudomonas palustris (strain BisA53).